Reading from the N-terminus, the 378-residue chain is RIB43A-like with coiled-coils protein 1 (378 aa).

Coiled coils occupy residues Arg-153–Asp-250 and Glu-279–Phe-334.

The protein belongs to the RIB43A family. As to quaternary structure, microtubule inner protein component of sperm flagellar doublet microtubules.

It localises to the cytoplasm. It is found in the cytoskeleton. The protein localises to the flagellum axoneme. This Rattus norvegicus (Rat) protein is RIB43A-like with coiled-coils protein 1 (Ribc1).